A 357-amino-acid polypeptide reads, in one-letter code: Hemolysin VllY (357 aa).

VOC domains follow at residues 12–132 (GFEF…FVDR) and 162–313 (EIDH…IFTQ). Residues His165, His243, and Glu322 each contribute to the Fe cation site.

The protein belongs to the 4HPPD family. Fe cation is required as a cofactor.

In Vibrio vulnificus (strain CMCP6), this protein is Hemolysin VllY (vllY).